The primary structure comprises 110 residues: U1-lycotoxin-Ls1kk (110 aa).

The N-terminal stretch at methionine 1–alanine 20 is a signal peptide. The propeptide occupies glutamate 21 to arginine 44. Disulfide bonds link cysteine 47–cysteine 62, cysteine 54–cysteine 71, cysteine 61–cysteine 89, and cysteine 73–cysteine 87.

Belongs to the neurotoxin 19 (CSTX) family. 03 subfamily. Expressed by the venom gland.

It localises to the secreted. This Lycosa singoriensis (Wolf spider) protein is U1-lycotoxin-Ls1kk.